A 143-amino-acid polypeptide reads, in one-letter code: Transcriptional regulator MraZ (143 aa).

SpoVT-AbrB domains lie at 5–47 (TYTP…PKEE) and 76–119 (ADEQ…DAQA).

This sequence belongs to the MraZ family. As to quaternary structure, forms oligomers.

The protein resides in the cytoplasm. The protein localises to the nucleoid. The chain is Transcriptional regulator MraZ from Corynebacterium glutamicum (strain R).